A 209-amino-acid chain; its full sequence is uncharacterized protein (209 aa).

It belongs to the flavoredoxin family. It depends on FMN as a cofactor.

This is an uncharacterized protein from Halalkalibacterium halodurans (strain ATCC BAA-125 / DSM 18197 / FERM 7344 / JCM 9153 / C-125) (Bacillus halodurans).